A 195-amino-acid polypeptide reads, in one-letter code: dITP/XTP pyrophosphatase (195 aa).

7-12 is a substrate binding site; the sequence is SSNKGK. Mg(2+)-binding residues include Glu38 and Asp68. Catalysis depends on Asp68, which acts as the Proton acceptor. Substrate is bound by residues Ser69, 150–153, Lys173, and 178–179; these read FGYD and HR.

Belongs to the HAM1 NTPase family. Homodimer. The cofactor is Mg(2+).

It carries out the reaction XTP + H2O = XMP + diphosphate + H(+). The catalysed reaction is dITP + H2O = dIMP + diphosphate + H(+). It catalyses the reaction ITP + H2O = IMP + diphosphate + H(+). Pyrophosphatase that catalyzes the hydrolysis of nucleoside triphosphates to their monophosphate derivatives, with a high preference for the non-canonical purine nucleotides XTP (xanthosine triphosphate), dITP (deoxyinosine triphosphate) and ITP. Seems to function as a house-cleaning enzyme that removes non-canonical purine nucleotides from the nucleotide pool, thus preventing their incorporation into DNA/RNA and avoiding chromosomal lesions. The protein is dITP/XTP pyrophosphatase of Nautilia profundicola (strain ATCC BAA-1463 / DSM 18972 / AmH).